Consider the following 793-residue polypeptide: Ribosome biogenesis protein BOP1 homolog (793 aa).

Basic residues predominate over residues 1-11; the sequence is MTKKLTLKRKG. The tract at residues 1 to 168 is disordered; sequence MTKKLTLKRK…DSDTSDEEDI (168 aa). Composition is skewed to acidic residues over residues 44–53, 60–72, and 83–116; these read EDTTDDEGID, SSED…DEEG, and SSEE…DGDE. The segment covering 117 to 129 has biased composition (basic and acidic residues); it reads EKPTTSKQNKSED. Residues 133–143 are compositionally biased toward polar residues; sequence SSKVSKKTQPP. Residues 146-161 show a composition bias toward basic and acidic residues; that stretch reads DLVKRDPSHPEYHDSD. 7 WD repeats span residues 454 to 495, 497 to 535, 579 to 621, 624 to 662, 665 to 704, 708 to 747, and 763 to 793; these read GHTD…RTIE, EDVV…KVLV, NHFK…SQIP, KSKG…LVKK, TNSK…KPYQ, LHRN…DLLQ, and REDF…RLYT.

It belongs to the WD repeat BOP1/ERB1 family.

It is found in the nucleus. It localises to the nucleolus. The protein resides in the nucleoplasm. In terms of biological role, required for maturation of ribosomal RNAs and formation of the large ribosomal subunit. In Drosophila ananassae (Fruit fly), this protein is Ribosome biogenesis protein BOP1 homolog.